Here is a 328-residue protein sequence, read N- to C-terminus: Phenylalanine--tRNA ligase alpha subunit (328 aa).

Glu-253 serves as a coordination point for Mg(2+).

It belongs to the class-II aminoacyl-tRNA synthetase family. Phe-tRNA synthetase alpha subunit type 1 subfamily. Tetramer of two alpha and two beta subunits. Mg(2+) serves as cofactor.

It is found in the cytoplasm. It catalyses the reaction tRNA(Phe) + L-phenylalanine + ATP = L-phenylalanyl-tRNA(Phe) + AMP + diphosphate + H(+). This is Phenylalanine--tRNA ligase alpha subunit from Coxiella burnetii (strain CbuG_Q212) (Coxiella burnetii (strain Q212)).